The sequence spans 30 residues: Propionyl-CoA carboxylase alpha chain (30 aa).

In terms of domain architecture, Biotin carboxylation spans 1 to 30; that stretch reads PKIRKVLVANRGEIAIRVMRTXKELGIATV.

Dodecamer composed of six biotin-containing alpha subunits and six beta subunits. It depends on Mg(2+) as a cofactor. Mn(2+) is required as a cofactor. Biotin serves as cofactor.

It catalyses the reaction propanoyl-CoA + hydrogencarbonate + ATP = (S)-methylmalonyl-CoA + ADP + phosphate + H(+). It functions in the pathway metabolic intermediate metabolism; propanoyl-CoA degradation; succinyl-CoA from propanoyl-CoA: step 1/3. Functionally, this is one of the 2 subunits of the biotin-dependent propionyl-CoA carboxylase (PCC), the enzyme catalyzing the carboxylation of propionyl-CoA/propanoyl-CoA to D-methylmalonyl-CoA/(S)-methylmalonyl-CoA. Within the holoenzyme, the alpha subunit catalyzes the ATP-dependent carboxylation of the biotin carried by the biotin carboxyl carrier (BCC) domain, while the beta subunit then transfers the carboxyl group from carboxylated biotin to propionyl-CoA. Propionyl-CoA carboxylase also carboxylates acetyl-CoA, butyryl-CoA and succinyl-CoA. This chain is Propionyl-CoA carboxylase alpha chain, found in Myxococcus xanthus.